The primary structure comprises 199 residues: MARCKS-related protein (199 aa).

The disordered stretch occupies residues M1–E199. The N-myristoyl glycine moiety is linked to residue G2. Phosphothreonine is present on T14. A compositionally biased stretch (low complexity) spans E16–A26. Phosphoserine occurs at positions 22, 36, and 48. Over residues G53–A64 the composition is skewed to low complexity. S71 is subject to Phosphoserine. Over residues A74–T85 the composition is skewed to basic and acidic residues. T85 is modified (phosphothreonine). Residues P86 to F98 show a composition bias toward basic residues. Residues K87 to K110 form an effector domain involved in lipid-binding and calmodulin-binding region. Phosphoserine; by PKC occurs at positions 93, 101, and 104. S119 bears the Phosphoserine mark. S120 bears the Phosphoserine; by MAPK8 mark. Phosphoserine occurs at positions 132 and 135. T148 bears the Phosphothreonine; by MAPK8 mark. A phosphoserine mark is found at S151, S162, and S165. A compositionally biased stretch (low complexity) spans G175–E199. Position 183 is a phosphothreonine; by MAPK8 (T183).

Belongs to the MARCKS family. In terms of assembly, binds to filamentous actin (F-actin), but not to monomeric G-actin, independently of its phosphorylation status. Interacts with calmodulin. Post-translationally, phosphorylated. Phosphorylation at Ser-120 and Thr-183 is non-redundantly catalyzed by MAPK8 in vivo. Phosphorylation at Thr-148 is preferentially catalyzed by MAPK8 in vivo, but this modification can also be catalyzed by other kinases in the absence of MAPK8. May be phosphorylated by protein kinase C, which disrupts the interaction with calmodulin.

The protein localises to the cytoplasm. Its subcellular location is the cytoskeleton. It is found in the cell membrane. In terms of biological role, controls cell movement by regulating actin cytoskeleton homeostasis and filopodium and lamellipodium formation. When unphosphorylated, induces cell migration. When phosphorylated by MAPK8, induces actin bundles formation and stabilization, thereby reducing actin plasticity, hence restricting cell movement, including neuronal migration. May be involved in coupling the protein kinase C and calmodulin signal transduction systems. This is MARCKS-related protein (Marcksl1) from Rattus norvegicus (Rat).